Here is a 506-residue protein sequence, read N- to C-terminus: Serine/threonine-protein kinase RIO1 (506 aa).

The disordered stretch occupies residues 22-52 (TASSSSDDEPEQAVVKQEKLEAGEQIEEQYD). The Protein kinase domain maps to 142–506 (LNIDGCISTG…KKRAHRQHMK (365 aa)). ATP is bound by residues 148 to 156 (ISTGKEANV), K169, and L241. D285 acts as the Proton acceptor in catalysis. N290 lines the ATP pocket. 2 residues coordinate Mg(2+): N290 and D302. Residue D302 is the 4-aspartylphosphate intermediate of the active site. Residues 418-506 (GDGFGEEHDD…KKRAHRQHMK (89 aa)) are disordered. Over residues 424 to 435 (EHDDSDDNDDEE) the composition is skewed to acidic residues. Residues 454-490 (EKERKIAMHTRNREETAEERKERKAAVKEEKREQRKE) show a composition bias toward basic and acidic residues. Over residues 491 to 506 (KIPKHLKKRAHRQHMK) the composition is skewed to basic residues.

It belongs to the protein kinase superfamily. RIO-type Ser/Thr kinase family. It depends on Mg(2+) as a cofactor. As to expression, expressed in vulva and uterine cells, uterine seam cells (utse), spermatheca and in the nervous system including chemosensory neurons in the head, nerve ring neurons (RID/RIF), inhibitory motor neurons (DA/DD/VA/VD), mechanosensory neurons (ALML/PLML) and tail sensory neurons (DVA//PDA). Also expressed in intestine and pharynx (procorpus) and rectal valve and gland.

The protein localises to the cytoplasm. The enzyme catalyses L-seryl-[protein] + ATP = O-phospho-L-seryl-[protein] + ADP + H(+). It carries out the reaction L-threonyl-[protein] + ATP = O-phospho-L-threonyl-[protein] + ADP + H(+). Involved in the final steps of cytoplasmic maturation of the 40S ribosomal subunit. Despite the protein kinase domain is proposed to act predominantly as an ATPase. The catalytic activity regulates its dynamic association with the 40S subunit. Plays a role in oogenesis by regulating germ cell proliferation, progression through diplotene and diakinesis stages and oocyte maturation. Regulates germline development probably by regulating the phosphorylation of mpk-1. Involved in larval development. The protein is Serine/threonine-protein kinase RIO1 of Caenorhabditis elegans.